A 634-amino-acid chain; its full sequence is MYDLLKTIDDPADLRRLDRRQLQPLADELRAFVLDSVSKTGGHLSSNLGTVELTIALHYVFNTPNDRIVWDVGHQTYPHKILTGRRDQMHSLRQYDGISGFPRRSESEYDTFGTAHSSTSISAALGMAIGSQLNGDDRFSIAVIGDGAMTAGMAFEAMNNAGVSEDAKLLVILNDNDMSISPPVGALNRHLARLMSGRFYAAARAGVERVLSVAPPVLELARKLEEHAKGMVVPATLFEEFGFNYIGPIDGHDLDSLIPTLQNIRELRGPQFLHVVTKKGQGYKLAEADPVLYHGPGKFNPAEGIKPSPTPAKKTYTQVFGEWLCDEAERDSRVVGITPAMREGSGMVEFEKRFKDRYYDVGIAEQHAVTFAGGLATEGLKPVVAIYSTFLQRAYDQLIHDVALQNLPVVFAIDRAGLVGADGATHAGAYDLAFMRCIPNMTIMAASDENECRQMLHTALQQPNPTAVRYPRGAGTGVATVKEFTEIPLGKGEVRRRTSQPEGKRVAILAFGTMVAPSLAAGEELDATVANMRFVKPVDAALVRELAETHDYLVTVEEGCVMGGAGSACVEALMESGVIRPVIQLGLPDQFIDHGDPAKLLAQCGLDGAGIAKSIRERFLSPAADVADQAKRVA.

Thiamine diphosphate contacts are provided by residues H74 and 115 to 117 (AHS). Residue D146 participates in Mg(2+) binding. Thiamine diphosphate contacts are provided by residues 147–148 (GA), N176, Y283, and E365. N176 is a binding site for Mg(2+).

Belongs to the transketolase family. DXPS subfamily. Homodimer. Requires Mg(2+) as cofactor. The cofactor is thiamine diphosphate.

The enzyme catalyses D-glyceraldehyde 3-phosphate + pyruvate + H(+) = 1-deoxy-D-xylulose 5-phosphate + CO2. Its pathway is metabolic intermediate biosynthesis; 1-deoxy-D-xylulose 5-phosphate biosynthesis; 1-deoxy-D-xylulose 5-phosphate from D-glyceraldehyde 3-phosphate and pyruvate: step 1/1. In terms of biological role, catalyzes the acyloin condensation reaction between C atoms 2 and 3 of pyruvate and glyceraldehyde 3-phosphate to yield 1-deoxy-D-xylulose-5-phosphate (DXP). This Burkholderia ambifaria (strain MC40-6) protein is 1-deoxy-D-xylulose-5-phosphate synthase.